Reading from the N-terminus, the 235-residue chain is MKLLIDVGNTSLKAKLWQNEQVQACDLNNLPWHAITHVIYACVGRSELLNAILAQAAFNSISCFEAKVTKTLGGLTCAYEHFNNLGIDRWLALIASFTLYPNKACIVVDAGTATTIDVLNCDGQHLGGWILPGLDLMTRSLTQNTQRVFDDENTPFTNQLGINTPNGLKNGALVATIGAINQAKPYLNDKNTQIIFAGGYGSLLQQQFKESIFDPMLVIKGLNYWYELDENSNKL.

Aspartate 6–lysine 13 is a binding site for ATP. Residues tyrosine 79 and glycine 86–arginine 89 contribute to the substrate site. Aspartate 88 (proton acceptor) is an active-site residue. Residue aspartate 109 coordinates K(+). Threonine 112 lines the ATP pocket. Threonine 164 is a substrate binding site.

The protein belongs to the type III pantothenate kinase family. As to quaternary structure, homodimer. Requires NH4(+) as cofactor. It depends on K(+) as a cofactor.

It is found in the cytoplasm. It catalyses the reaction (R)-pantothenate + ATP = (R)-4'-phosphopantothenate + ADP + H(+). Its pathway is cofactor biosynthesis; coenzyme A biosynthesis; CoA from (R)-pantothenate: step 1/5. In terms of biological role, catalyzes the phosphorylation of pantothenate (Pan), the first step in CoA biosynthesis. This Pseudoalteromonas translucida (strain TAC 125) protein is Type III pantothenate kinase.